The following is a 759-amino-acid chain: Xaa-Pro dipeptidyl-peptidase (759 aa).

Residues serine 347, aspartate 467, and histidine 497 each act as charge relay system in the active site.

It belongs to the peptidase S15 family. Homodimer.

The protein resides in the secreted. The catalysed reaction is Hydrolyzes Xaa-Pro-|- bonds to release unblocked, N-terminal dipeptides from substrates including Ala-Pro-|-p-nitroanilide and (sequentially) Tyr-Pro-|-Phe-Pro-|-Gly-Pro-|-Ile.. In terms of biological role, removes N-terminal dipeptides sequentially from polypeptides having unsubstituted N-termini provided that the penultimate residue is proline. The protein is Xaa-Pro dipeptidyl-peptidase (pepX) of Streptococcus gordonii.